The following is a 241-amino-acid chain: Agamous-like MADS-box protein AGL8 homolog (241 aa).

The MADS-box domain occupies 3–57 (RGRVQLKRIENKINRQVTFSKRRSGLLKKAHEISVLCDAEVALVIFSSKGKLFEY). The region spanning 88-178 (SENWVLEHAK…LKKIKEREKN (91 aa)) is the K-box domain.

The protein resides in the nucleus. In terms of biological role, probable transcription factor. This Sinapis alba (White mustard) protein is Agamous-like MADS-box protein AGL8 homolog (AGL8).